Consider the following 426-residue polypeptide: 5-hydroxybenzimidazole synthase BzaB (426 aa).

Residues Met-95, Tyr-124, His-163, 185–187 (SRG), 226–229 (DAIR), and Glu-265 contribute to the substrate site. His-269 lines the Zn(2+) pocket. Phe-292 serves as a coordination point for substrate. Zn(2+) is bound at residue His-333. The [4Fe-4S] cluster site is built by Cys-407, Cys-410, and Cys-414.

Belongs to the ThiC family. 5-hydroxybenzimidazole synthase subfamily. [4Fe-4S] cluster is required as a cofactor.

The enzyme catalyses 5-amino-1-(5-phospho-beta-D-ribosyl)imidazole + AH2 + S-adenosyl-L-methionine = 5-hydroxybenzimidazole + 5'-deoxyadenosine + formate + L-methionine + A + NH4(+) + phosphate + 2 H(+). Together with BzaA, probably catalyzes the conversion of aminoimidazole ribotide (AIR) to 5-hydroxybenzimidazole (5-HBI) in a radical S-adenosyl-L-methionine (SAM)-dependent reaction. Is thus involved in the anaerobic biosynthesis of the benzimidazole lower axial ligand of the cobamide produced by M.thermoacetica. Requires BzaA for catalytic activity, as BzaB alone displays no activity. The polypeptide is 5-hydroxybenzimidazole synthase BzaB (Moorella thermoacetica (strain ATCC 39073 / JCM 9320)).